Consider the following 250-residue polypeptide: MNETEKSTHFGYQTVPTDQKTDKVKHVFESVAAKYDLMNDLMSLGIHRCWKDFAITQCRLRTGQRILDLAGGTGDLAKRISPLVGDEGEVVIADINAAMLNVGRRRLLDQGIFRNIQFIQADAEKLPFPNNFFDRIVIGFGLRNVTNQLAALQSMHRVIKPGGFVVILEFSKPTLAPLKAVYDAYSFQLLPRLGKLVAKDEESYRYLVESIRMHPDQEALLSKMTDAGFEDCDYHNLSGGIVAVHRGYKF.

S-adenosyl-L-methionine-binding positions include Thr-73, Asp-94, and 122-123 (DA).

The protein belongs to the class I-like SAM-binding methyltransferase superfamily. MenG/UbiE family.

It catalyses the reaction a 2-demethylmenaquinol + S-adenosyl-L-methionine = a menaquinol + S-adenosyl-L-homocysteine + H(+). The enzyme catalyses a 2-methoxy-6-(all-trans-polyprenyl)benzene-1,4-diol + S-adenosyl-L-methionine = a 5-methoxy-2-methyl-3-(all-trans-polyprenyl)benzene-1,4-diol + S-adenosyl-L-homocysteine + H(+). Its pathway is quinol/quinone metabolism; menaquinone biosynthesis; menaquinol from 1,4-dihydroxy-2-naphthoate: step 2/2. It participates in cofactor biosynthesis; ubiquinone biosynthesis. Its function is as follows. Methyltransferase required for the conversion of demethylmenaquinol (DMKH2) to menaquinol (MKH2) and the conversion of 2-polyprenyl-6-methoxy-1,4-benzoquinol (DDMQH2) to 2-polyprenyl-3-methyl-6-methoxy-1,4-benzoquinol (DMQH2). The chain is Ubiquinone/menaquinone biosynthesis C-methyltransferase UbiE from Coxiella burnetii (strain RSA 331 / Henzerling II).